The chain runs to 184 residues: Ribosome-recycling factor (184 aa).

Belongs to the RRF family.

Its subcellular location is the cytoplasm. Responsible for the release of ribosomes from messenger RNA at the termination of protein biosynthesis. May increase the efficiency of translation by recycling ribosomes from one round of translation to another. The chain is Ribosome-recycling factor from Lachnoclostridium phytofermentans (strain ATCC 700394 / DSM 18823 / ISDg) (Clostridium phytofermentans).